The chain runs to 2684 residues: Probable polyketide synthase 27 (2684 aa).

The Ketosynthase family 3 (KS3) domain occupies 11–442 (CGDVAIIGIG…GSNVCLILSE (432 aa)). Residues C183, H322, and H365 each act as for beta-ketoacyl synthase activity in the active site. An acyl/malonyl transferases region spans residues 650-683 (GVSADIIVGHSLGEMSSSYSSGMIDFETLCYLIY). The active-site For acyl/malonyl transferase activity is S660. Positions 958-1087 (HEKITSEGPP…GNFSLFKHNS (130 aa)) are N-terminal hotdog fold. A PKS/mFAS DH domain is found at 958–1276 (HEKITSEGPP…CTSVSLVNPR (319 aa)). H999 serves as the catalytic Proton acceptor; for dehydratase activity. The tract at residues 1104-1276 (NFTTISKQEF…CTSVSLVNPR (173 aa)) is C-terminal hotdog fold. Catalysis depends on D1173, which acts as the Proton donor; for dehydratase activity. The disordered stretch occupies residues 1202 to 1221 (IPSSSSSSKDDNDCDSNNNN). The Carrier domain maps to 2585–2662 (SDNEFIHSTI…QSIDIIKFGY (78 aa)). Position 2622 is an O-(pantetheine 4'-phosphoryl)serine (S2622).

Pantetheine 4'-phosphate serves as cofactor.

In terms of biological role, probable polyketide synthase. The sequence is that of Probable polyketide synthase 27 (pks27) from Dictyostelium discoideum (Social amoeba).